A 214-amino-acid polypeptide reads, in one-letter code: Putative ankyrin repeat protein R844 (214 aa).

ANK repeat units lie at residues 41–70, 81–110, 111–140, 142–170, and 172–200; these read VEKN…QNKF, SLDK…NVKT, DNNM…DVRA, NDCA…DVTS, and NNFA…DIRA.

The protein is Putative ankyrin repeat protein R844 of Acanthamoeba polyphaga mimivirus (APMV).